A 265-amino-acid polypeptide reads, in one-letter code: MRRILVTNDDGIYAPGLRAAVRSVEDLGEVIAVAPSGQRSGVGRSVSVFEPLRMAEVNLDGKKAYAVSGTPTDSVILGIFVVMNGELPDLAVSGINVGENISTDTVTTSGTIGAAIEAASYGVPAIAASIQVADQGDKFDNNHSVEYKFDTAMNLLRRVASRVLERGMPVGVDILNINLPLNATEDTEIVVTRLARKIFKTAVEERRDPRGRPYYWIGGDLICSEREGTDVRAVYQEGKISVTPLTIDSTAKVDFGEIMDLLEVI.

The a divalent metal cation site is built by Asp9, Asp10, Ser40, and Asn96.

The protein belongs to the SurE nucleotidase family. A divalent metal cation serves as cofactor.

It localises to the cytoplasm. It catalyses the reaction a ribonucleoside 5'-phosphate + H2O = a ribonucleoside + phosphate. Its function is as follows. Nucleotidase that shows phosphatase activity on nucleoside 5'-monophosphates. This Methanothrix thermoacetophila (strain DSM 6194 / JCM 14653 / NBRC 101360 / PT) (Methanosaeta thermophila) protein is 5'-nucleotidase SurE.